We begin with the raw amino-acid sequence, 950 residues long: Translation initiation factor IF-2 (950 aa).

2 disordered regions span residues 57–254 and 304–328; these read LAER…AVVI and DVSR…KSLS. Low complexity-rich tracts occupy residues 101-131 and 139-169; these read AEPQ…EPAA and AAPL…QPAA. A compositionally biased stretch (pro residues) spans 170-215; it reads PAAPPAPTAQPSAPPPAAAQPRPPQPSAPSRPPPPGYRPAPPPGAR. Low complexity predominate over residues 216–233; it reads PPVSAAPGAPGQPGAAGQ. Residues 449 to 618 enclose the tr-type G domain; sequence IRPPVVTVMG…ALQSEVLELK (170 aa). Residues 458-465 are G1; it reads GHVDHGKT. A GTP-binding site is contributed by 458-465; sequence GHVDHGKT. Positions 483–487 are G2; that stretch reads GITQH. Residues 504–507 form a G3 region; sequence DTPG. Residues 504–508 and 558–561 contribute to the GTP site; these read DTPGH and NKVD. Residues 558-561 are G4; it reads NKVD. Positions 594–596 are G5; sequence SAR.

The protein belongs to the TRAFAC class translation factor GTPase superfamily. Classic translation factor GTPase family. IF-2 subfamily.

It is found in the cytoplasm. One of the essential components for the initiation of protein synthesis. Protects formylmethionyl-tRNA from spontaneous hydrolysis and promotes its binding to the 30S ribosomal subunits. Also involved in the hydrolysis of GTP during the formation of the 70S ribosomal complex. The chain is Translation initiation factor IF-2 from Anaeromyxobacter dehalogenans (strain 2CP-C).